The sequence spans 145 residues: Basic phospholipase A2 BFPA (145 aa).

Residues 1-27 (MNPAHLLVLLAVCVSLLGAANIPPQSL) form the signal peptide. 7 cysteine pairs are disulfide-bonded: Cys38-Cys97, Cys52-Cys144, Cys54-Cys70, Cys69-Cys125, Cys76-Cys118, Cys86-Cys111, and Cys104-Cys116. Ca(2+) is bound by residues Tyr53, Gly55, and Gly57. The active site involves His73. Asp74 provides a ligand contact to Ca(2+). Residue Asp119 is part of the active site.

It belongs to the phospholipase A2 family. Group I subfamily. D49 sub-subfamily. Homodimer; disulfide-linked. Ca(2+) serves as cofactor. In terms of tissue distribution, expressed by the venom gland.

Its subcellular location is the secreted. It carries out the reaction a 1,2-diacyl-sn-glycero-3-phosphocholine + H2O = a 1-acyl-sn-glycero-3-phosphocholine + a fatty acid + H(+). Snake venom phospholipase A2 (PLA2) that inhibits blood coagulation and shows bactericidal activities against both Gram-negative and -positive bacteria (E.coli, MIC=0.4 uM and S.aureus, MIC=0.1 uM). PLA2 catalyzes the calcium-dependent hydrolysis of the 2-acyl groups in 3-sn-phosphoglycerides. The chain is Basic phospholipase A2 BFPA from Bungarus fasciatus (Banded krait).